A 327-amino-acid polypeptide reads, in one-letter code: MVVLAGPPAVDHIPLLRSPDPGDVFSGVPVVDLGSPGAARAVVDACERYGFFKVVNHGVATDTMDKAESEAVRFFSQTQPDKDRSGPAYPFGYGSKRIGFNGDMGWLEYLLLALDDASLADACTVPSCAVFRAALNEYISGVRKVAVRVMEAMSEGLGIAQADALSALVTAEGSDQVFRVNHYPPCRALQGLGCSVTGFGEHTDPQLVSVLRSNGTSGLQIALRDGQWVSVPSDRDSFFVNVGDSLQVLTNGRFKSVKHRVVANSLKSRVSFIYFGGPPLAQRIAPLPQLLGEGEQSLYKEFTWDEYKKAAYKSRLGDNRLAQFEKK.

Residues 173 to 278 (GSDQVFRVNH…RVSFIYFGGP (106 aa)) enclose the Fe2OG dioxygenase domain. Tyrosine 183 contacts 2-oxoglutarate. Residues histidine 202, aspartate 204, and histidine 259 each contribute to the Fe cation site. 2-oxoglutarate contacts are provided by arginine 269 and serine 271.

It belongs to the iron/ascorbate-dependent oxidoreductase family. GA2OX subfamily. It depends on L-ascorbate as a cofactor. Requires Fe(2+) as cofactor. In terms of tissue distribution, expressed in roots, shoot apex, leaf blades, leaf sheaths, stems and flowers.

It catalyses the reaction gibberellin A1 + 2-oxoglutarate + O2 = gibberellin A8 + succinate + CO2. Catalyzes the 2-beta-hydroxylation of several biologically active gibberellins, leading to the homeostatic regulation of their endogenous level. Catabolism of gibberellins (GAs) plays a central role in plant development. In vitro, converts GA1, GA20, and GA29 to the corresponding 2-beta-hydroxylated products GA8, GA29-catabolite, respectively. In Oryza sativa subsp. japonica (Rice), this protein is Gibberellin 2-beta-dioxygenase 3.